Here is a 297-residue protein sequence, read N- to C-terminus: Probable E3 SUMO-protein ligase RNF212 (297 aa).

The RING-type zinc finger occupies 7 to 46; it reads CNRCFQPPHRTSCFSLTNCGHVYCDACLGKGKKNECLICK. Residues 91–124 are a coiled coil; that stretch reads RKRLLAFYREKISRLEESLRKSVLQIEQLQSMRS.

It localises to the nucleus. Its subcellular location is the chromosome. It functions in the pathway protein modification; protein sumoylation. In terms of biological role, SUMO E3 ligase that acts as a regulator of crossing-over during meiosis: required to couple chromosome synapsis to the formation of crossover-specific recombination complexes. Localizes to recombination sites and stabilizes meiosis-specific recombination factors, such as MutS-gamma complex proteins (MSH4 and MSH5) and TEX11. May mediate sumoylation of target proteins MSH4 and/or MSH5, leading to enhance their binding to recombination sites. Acts as a limiting factor for crossover designation and/or reinforcement and plays an antagonist role with CCNB1IP1/HEI10 in the regulation of meiotic recombination. The chain is Probable E3 SUMO-protein ligase RNF212 (RNF212) from Homo sapiens (Human).